A 143-amino-acid polypeptide reads, in one-letter code: Deoxyuridine 5'-triphosphate nucleotidohydrolase (143 aa).

Substrate is bound by residues 63 to 65, Asn-76, 80 to 82, and Lys-90; these read RSG and TID.

This sequence belongs to the dUTPase family. Requires Mg(2+) as cofactor.

The enzyme catalyses dUTP + H2O = dUMP + diphosphate + H(+). The protein operates within pyrimidine metabolism; dUMP biosynthesis; dUMP from dCTP (dUTP route): step 2/2. This enzyme is involved in nucleotide metabolism: it produces dUMP, the immediate precursor of thymidine nucleotides and it decreases the intracellular concentration of dUTP so that uracil cannot be incorporated into DNA. The sequence is that of Deoxyuridine 5'-triphosphate nucleotidohydrolase from Clostridioides difficile (Peptoclostridium difficile).